The primary structure comprises 858 residues: DNA mismatch repair protein MutS (858 aa).

600–607 (GPNMSGKS) serves as a coordination point for ATP. Residues 803-823 (EAASDEVDDNNSENSPMTDAE) form a disordered region.

This sequence belongs to the DNA mismatch repair MutS family.

Functionally, this protein is involved in the repair of mismatches in DNA. It is possible that it carries out the mismatch recognition step. This protein has a weak ATPase activity. This is DNA mismatch repair protein MutS from Lactobacillus helveticus (strain DPC 4571).